The primary structure comprises 151 residues: Proline-rich acidic protein 1 (151 aa).

The N-terminal stretch at 1–20 (MRRLLLVTSLVVVLLWEAGA) is a signal peptide. A disordered region spans residues 71–151 (LTTEEKPRGQ…EDQDHIYHPQ (81 aa)).

Interacts with isoform 1 and isoform 3 of MAD1L1. Interacts with MTTP. Highly expressed in the intestinal epithelial cells (at protein level). Abundantly expressed in the epithelial cells of the liver, kidney and cervix. Significantly down-regulated in hepatocellular carcinoma and right colon adenocarcinoma compared with the respective adjacent normal tissues. Expressed in epididymis (at protein level).

It is found in the secreted. The protein resides in the endoplasmic reticulum. Lipid-binding protein which promotes lipid absorption by facilitating MTTP-mediated lipid transfer (mainly triglycerides and phospholipids) and MTTP-mediated apoB lipoprotein assembly and secretion. Protects the gastrointestinal epithelium from irradiation-induced apoptosis. May play an important role in maintaining normal growth homeostasis in epithelial cells. Involved in p53/TP53-dependent cell survival after DNA damage. May down-regulate the expression of MAD1L1 and exert a suppressive role in mitotic spindle assembly checkpoint in hepatocellular carcinomas. This chain is Proline-rich acidic protein 1 (PRAP1), found in Homo sapiens (Human).